Here is a 486-residue protein sequence, read N- to C-terminus: MATFKDACYHYKRINKLNHTVLKLGVNDTWRPSPPTKYKGWCLDCCQHTDLTYCRGCTMYHVCQWCSQYGRCFLDNEPHLLRMRTFKNEVTKDDLKNLIDMYETLFPMNQRIVCRFINNTRQHKCRNECMTQWYNHLLLPITLQSMSIELDGDVYYVFGYYDNMNSINQTPFSFTNLVDIYDKLLLDDVNFTRMSFLPASLQQEYALRYFSKSRFISEQRKCVNDSHFSINVIENLHNPSFKVQITRNCSELSFDWNKACKLVKKISAYFDILKTSHIEFYSVSTRCRIFTQCKLKMASKLIKPNYITSNHKTLATEVHNCKWCSVNNSYTVWNDFRIKNIYDNIFNFLRALVKSNVNIGHCSSQEKIYEYVEDVLNVCDDERWKTSIMEIFNCLEPVELDDVKYVLLNHEINWDVINVLVHSIGKVPQILTLENVIAIMQSIIYEWFDIRYMRNTPMVTFTIDKLRRLHTGLKTVDYDSGISDIE.

Residues 1 to 81 (MATFKDACYH…CFLDNEPHLL (81 aa)) form an RNA-binding region. Positions 42–79 (CLDCCQHTDLTYCRGCTMYHVCQWCSQYGRCFLDNEPH) are zinc-binding domain. Positions 82–176 (RMRTFKNEVT…INQTPFSFTN (95 aa)) are important for cytoskeleton localization. Residues 317–486 (EVHNCKWCSV…DYDSGISDIE (170 aa)) are interaction with host IRF3. The short motif at 479–483 (DSGIS) is the IKBKB-like degron (ILD) motif element. Positions 480–483 (SGIS) match the pLxIS motif motif.

The protein belongs to the rotavirus NSP1 family. In terms of assembly, interacts (via C-terminus) with host IRF3; this interaction leads to IRF3 degradation. Interacts with host IRF7; this interaction leads to IRF7 degradation. Interacts with host CUL1 and CUL3. Interacts with host BTRC. The C-terminal region is phosphorylated by host CKII/CSNK2A1. Phosphorylation of the DSGXS motif is essential for host NF-kappa-B inhibition.

Its subcellular location is the host cytoplasm. The protein resides in the host cytoskeleton. Plays a role in the inhibition of host innate immunity by inducing the degradation of key host factors required to activate interferon production such as IRF3, IRF5 or IRF7. Associates with components of cullin RING ligases (CRLs) including CUL1 or CUL3, which are essential multisubunit ubiquitination complexes, to modulate their activities. Recognizes the host NF-kappa-B regulator BTRC through the presence of a DSGXS motif in the C-terminal substrate recognition domain. This is Non-structural protein 1 from Rotavirus A (isolate RVA/Human/Japan/IGV-80-3/XXXX/GXP[X]) (RV-A).